We begin with the raw amino-acid sequence, 200 residues long: Glycerol-3-phosphate acyltransferase (200 aa).

Transmembrane regions (helical) follow at residues 9–29, 54–74, 81–101, 112–132, 140–160, and 165–185; these read IIIG…AYFW, VPGM…VLLA, DIAV…PLWL, GAGA…LVWL, YVSL…ALLN, and YLIF…SNIG.

The protein belongs to the PlsY family. As to quaternary structure, probably interacts with PlsX.

It is found in the cell membrane. The enzyme catalyses an acyl phosphate + sn-glycerol 3-phosphate = a 1-acyl-sn-glycero-3-phosphate + phosphate. The protein operates within lipid metabolism; phospholipid metabolism. In terms of biological role, catalyzes the transfer of an acyl group from acyl-phosphate (acyl-PO(4)) to glycerol-3-phosphate (G3P) to form lysophosphatidic acid (LPA). This enzyme utilizes acyl-phosphate as fatty acyl donor, but not acyl-CoA or acyl-ACP. The protein is Glycerol-3-phosphate acyltransferase of Desulforamulus reducens (strain ATCC BAA-1160 / DSM 100696 / MI-1) (Desulfotomaculum reducens).